Reading from the N-terminus, the 73-residue chain is Mu-sparatoxin-Hv2 (73 aa).

The signal sequence occupies residues 1–20; it reads MKFAIVITLLLVAFSAVALA. Positions 21 to 35 are excised as a propeptide; sequence DKSIERAVMDLITAR. 3 cysteine pairs are disulfide-bonded: cysteine 39–cysteine 53, cysteine 46–cysteine 58, and cysteine 52–cysteine 68. Position 72 is a phenylalanine amide (phenylalanine 72).

Belongs to the neurotoxin 10 (Hwtx-1) family. In terms of tissue distribution, expressed by the venom gland.

Its subcellular location is the secreted. Functionally, insecticidal toxin that potently and irreversibly blocks voltage-gated sodium channels (Nav) in cockroach dorsal unpaired median (DUM) neurons (IC(50)=833.7 nM). It does not change both the steady-state activation and inactivation curves, suggesting it acts as a pore blocker (possibly at Nav site 1). Does not show toxicity when intraperitoneally injected into mouse. This chain is Mu-sparatoxin-Hv2, found in Heteropoda venatoria (Brown huntsman spider).